A 158-amino-acid polypeptide reads, in one-letter code: Anaerobic ribonucleoside-triphosphate reductase-activating protein (158 aa).

Residues cysteine 26, cysteine 30, and cysteine 33 each contribute to the [4Fe-4S] cluster site. S-adenosyl-L-methionine contacts are provided by residues 32 to 34 (GCY) and glycine 74.

Belongs to the organic radical-activating enzymes family. As to quaternary structure, forms a tetramer composed of two NrdD and two NrdG subunits. The cofactor is [4Fe-4S] cluster.

It localises to the cytoplasm. It catalyses the reaction glycyl-[protein] + reduced [flavodoxin] + S-adenosyl-L-methionine = glycin-2-yl radical-[protein] + semiquinone [flavodoxin] + 5'-deoxyadenosine + L-methionine + H(+). Activation of anaerobic ribonucleoside-triphosphate reductase under anaerobic conditions by generation of an organic free radical, using S-adenosylmethionine and reduced flavodoxin as cosubstrates to produce 5'-deoxy-adenosine. This Pasteurella multocida (strain Pm70) protein is Anaerobic ribonucleoside-triphosphate reductase-activating protein (nrdG).